We begin with the raw amino-acid sequence, 226 residues long: Apoptosis regulator OPG045 (226 aa).

The essential and sufficient to inhibit host NLRP1 stretch occupies residues 32–37 (NVDHDY).

This sequence belongs to the orthopoxvirus OPG045 family. Homodimer. Interacts with host pro-apoptotic protein BCL2L11 (via BH3 domain). Interacts with host NLRP1. Interacts with host BAK.

It localises to the host mitochondrion outer membrane. The protein resides in the host cytoplasm. Plays a role in evading host innate immune response by inhibiting host inflammasome activation. Interacts with and inhibits NLR-mediated interleukin-1 beta/IL1B production in infected cells. At the host mitochondria outer membrane, interacts with the BH3 domain of host BAK and prevents BAK from binding active BAX. In turn, host apoptosis is inhibited. The polypeptide is Apoptosis regulator OPG045 (OPG045) (Vaccinia virus (strain Western Reserve) (VACV)).